A 112-amino-acid chain; its full sequence is Iron-sulfur cluster assembly protein CyaY (112 aa).

Belongs to the frataxin family.

Involved in iron-sulfur (Fe-S) cluster assembly. May act as a regulator of Fe-S biogenesis. The protein is Iron-sulfur cluster assembly protein CyaY of Delftia acidovorans (strain DSM 14801 / SPH-1).